A 273-amino-acid chain; its full sequence is Formamidopyrimidine-DNA glycosylase (273 aa).

The Schiff-base intermediate with DNA role is filled by P2. Residue E3 is the Proton donor of the active site. K59 functions as the Proton donor; for beta-elimination activity in the catalytic mechanism. Residues H92 and R111 each coordinate DNA. The FPG-type zinc-finger motif lies at 239–273 (KVYGKTGEPCVICGTPIEKIKLNGRGTHFCPHCQK). The active-site Proton donor; for delta-elimination activity is the R263.

Belongs to the FPG family. In terms of assembly, monomer. Requires Zn(2+) as cofactor.

It catalyses the reaction Hydrolysis of DNA containing ring-opened 7-methylguanine residues, releasing 2,6-diamino-4-hydroxy-5-(N-methyl)formamidopyrimidine.. The catalysed reaction is 2'-deoxyribonucleotide-(2'-deoxyribose 5'-phosphate)-2'-deoxyribonucleotide-DNA = a 3'-end 2'-deoxyribonucleotide-(2,3-dehydro-2,3-deoxyribose 5'-phosphate)-DNA + a 5'-end 5'-phospho-2'-deoxyribonucleoside-DNA + H(+). Its function is as follows. Involved in base excision repair of DNA damaged by oxidation or by mutagenic agents. Acts as a DNA glycosylase that recognizes and removes damaged bases. Has a preference for oxidized purines, such as 7,8-dihydro-8-oxoguanine (8-oxoG). Has AP (apurinic/apyrimidinic) lyase activity and introduces nicks in the DNA strand. Cleaves the DNA backbone by beta-delta elimination to generate a single-strand break at the site of the removed base with both 3'- and 5'-phosphates. The polypeptide is Formamidopyrimidine-DNA glycosylase (Listeria innocua serovar 6a (strain ATCC BAA-680 / CLIP 11262)).